We begin with the raw amino-acid sequence, 277 residues long: Ribosomal RNA small subunit methyltransferase A (277 aa).

Residues Asn24, Leu26, Gly51, Glu72, Asp96, and Asn123 each contribute to the S-adenosyl-L-methionine site.

Belongs to the class I-like SAM-binding methyltransferase superfamily. rRNA adenine N(6)-methyltransferase family. RsmA subfamily.

The protein resides in the cytoplasm. The catalysed reaction is adenosine(1518)/adenosine(1519) in 16S rRNA + 4 S-adenosyl-L-methionine = N(6)-dimethyladenosine(1518)/N(6)-dimethyladenosine(1519) in 16S rRNA + 4 S-adenosyl-L-homocysteine + 4 H(+). Functionally, specifically dimethylates two adjacent adenosines (A1518 and A1519) in the loop of a conserved hairpin near the 3'-end of 16S rRNA in the 30S particle. May play a critical role in biogenesis of 30S subunits. In Ureaplasma parvum serovar 3 (strain ATCC 27815 / 27 / NCTC 11736), this protein is Ribosomal RNA small subunit methyltransferase A.